We begin with the raw amino-acid sequence, 139 residues long: D-ribose pyranase (139 aa).

The active-site Proton donor is His20. Substrate contacts are provided by residues Asp28, His106, and 128-130; that span reads YAN.

Belongs to the RbsD / FucU family. RbsD subfamily. Homodecamer.

The protein resides in the cytoplasm. It catalyses the reaction beta-D-ribopyranose = beta-D-ribofuranose. It functions in the pathway carbohydrate metabolism; D-ribose degradation; D-ribose 5-phosphate from beta-D-ribopyranose: step 1/2. Functionally, catalyzes the interconversion of beta-pyran and beta-furan forms of D-ribose. This Haemophilus influenzae (strain 86-028NP) protein is D-ribose pyranase.